Consider the following 150-residue polypeptide: MTDRTQPHAVQVHTTAGRFGDTAAGTNRYADRGPSTSKVIAVITGLPIGGTLLLFAGLALAGTLLGLAVTTPLFILFSPVIVPATIVVGLSVAGFLTSGACGLTGLSSFSWVMNYIRQTHGSVPEQLEMAKHRMADVAGYVGQKTKDVGQ.

Helical transmembrane passes span 39–59 (VIAV…AGLA) and 73–93 (LFIL…LSVA).

This sequence belongs to the oleosin family. Expressed in seeds (at protein level).

It is found in the lipid droplet. Its subcellular location is the membrane. Functionally, may have a structural role to stabilize the lipid body during desiccation of the seed by preventing coalescence of the oil. Probably interacts with both lipid and phospholipid moieties of lipid bodies. May also provide recognition signals for specific lipase anchorage in lipolysis during seedling growth. This Arachis hypogaea (Peanut) protein is Oleosin Ara h 10.0102.